A 1187-amino-acid chain; its full sequence is DNA-directed RNA polymerase subunit beta (1187 aa).

The disordered stretch occupies residues 1150–1187; it reads KDEDDDPASSADDLGFNIGARPDAAAKEDQKAEEPEYQ. A compositionally biased stretch (basic and acidic residues) spans 1173–1187; it reads AAAKEDQKAEEPEYQ.

The protein belongs to the RNA polymerase beta chain family. As to quaternary structure, the RNAP catalytic core consists of 2 alpha, 1 beta, 1 beta' and 1 omega subunit. When a sigma factor is associated with the core the holoenzyme is formed, which can initiate transcription.

It catalyses the reaction RNA(n) + a ribonucleoside 5'-triphosphate = RNA(n+1) + diphosphate. DNA-dependent RNA polymerase catalyzes the transcription of DNA into RNA using the four ribonucleoside triphosphates as substrates. The protein is DNA-directed RNA polymerase subunit beta of Bifidobacterium longum (strain DJO10A).